Here is a 435-residue protein sequence, read N- to C-terminus: Light-independent protochlorophyllide reductase subunit N (435 aa).

Cys-23, Cys-48, and Cys-108 together coordinate [4Fe-4S] cluster.

Belongs to the BchN/ChlN family. In terms of assembly, protochlorophyllide reductase is composed of three subunits; ChlL, ChlN and ChlB. Forms a heterotetramer of two ChlB and two ChlN subunits. It depends on [4Fe-4S] cluster as a cofactor.

Its subcellular location is the plastid. The protein localises to the chloroplast. It catalyses the reaction chlorophyllide a + oxidized 2[4Fe-4S]-[ferredoxin] + 2 ADP + 2 phosphate = protochlorophyllide a + reduced 2[4Fe-4S]-[ferredoxin] + 2 ATP + 2 H2O. It participates in porphyrin-containing compound metabolism; chlorophyll biosynthesis (light-independent). Its function is as follows. Component of the dark-operative protochlorophyllide reductase (DPOR) that uses Mg-ATP and reduced ferredoxin to reduce ring D of protochlorophyllide (Pchlide) to form chlorophyllide a (Chlide). This reaction is light-independent. The NB-protein (ChlN-ChlB) is the catalytic component of the complex. The chain is Light-independent protochlorophyllide reductase subunit N from Auxenochlorella protothecoides (Green microalga).